We begin with the raw amino-acid sequence, 167 residues long: Ureidoglycolate lyase (167 aa).

The protein belongs to the ureidoglycolate lyase family. Homodimer. The cofactor is Ni(2+).

It carries out the reaction (S)-ureidoglycolate = urea + glyoxylate. It participates in nitrogen metabolism; (S)-allantoin degradation. Its function is as follows. Catalyzes the catabolism of the allantoin degradation intermediate (S)-ureidoglycolate, generating urea and glyoxylate. Involved in the utilization of allantoin as nitrogen source. This is Ureidoglycolate lyase from Pseudomonas fluorescens (strain Pf0-1).